Reading from the N-terminus, the 369-residue chain is Quinolinate synthase (369 aa).

Positions 47 and 64 each coordinate iminosuccinate. Position 111 (Cys111) interacts with [4Fe-4S] cluster. Iminosuccinate-binding positions include 142–144 (YVN) and Ser163. [4Fe-4S] cluster is bound at residue Cys231. Iminosuccinate contacts are provided by residues 257–259 (HPE) and Thr274. A [4Fe-4S] cluster-binding site is contributed by Cys321.

It belongs to the quinolinate synthase family. Type 3 subfamily. The cofactor is [4Fe-4S] cluster.

Its subcellular location is the cytoplasm. It carries out the reaction iminosuccinate + dihydroxyacetone phosphate = quinolinate + phosphate + 2 H2O + H(+). It participates in cofactor biosynthesis; NAD(+) biosynthesis; quinolinate from iminoaspartate: step 1/1. In terms of biological role, catalyzes the condensation of iminoaspartate with dihydroxyacetone phosphate to form quinolinate. The protein is Quinolinate synthase of Bacillus licheniformis (strain ATCC 14580 / DSM 13 / JCM 2505 / CCUG 7422 / NBRC 12200 / NCIMB 9375 / NCTC 10341 / NRRL NRS-1264 / Gibson 46).